A 151-amino-acid polypeptide reads, in one-letter code: Putative pre-16S rRNA nuclease (151 aa).

The protein belongs to the YqgF nuclease family.

The protein resides in the cytoplasm. Could be a nuclease involved in processing of the 5'-end of pre-16S rRNA. This Pelagibacter ubique (strain HTCC1062) protein is Putative pre-16S rRNA nuclease.